The primary structure comprises 529 residues: Peptide chain release factor 3 (529 aa).

The tr-type G domain maps to 11–280 (AKRRTFAIIS…GLVEWAPAPM (270 aa)). GTP contacts are provided by residues 20 to 27 (SHPDAGKT), 88 to 92 (DTPGH), and 142 to 145 (NKLD).

The protein belongs to the TRAFAC class translation factor GTPase superfamily. Classic translation factor GTPase family. PrfC subfamily.

The protein resides in the cytoplasm. Its function is as follows. Increases the formation of ribosomal termination complexes and stimulates activities of RF-1 and RF-2. It binds guanine nucleotides and has strong preference for UGA stop codons. It may interact directly with the ribosome. The stimulation of RF-1 and RF-2 is significantly reduced by GTP and GDP, but not by GMP. The polypeptide is Peptide chain release factor 3 (Shigella boydii serotype 18 (strain CDC 3083-94 / BS512)).